Reading from the N-terminus, the 152-residue chain is Small ribosomal subunit protein uS15 (152 aa).

Over residues 1-10 (MARMYARRRG) the composition is skewed to basic residues. The interval 1 to 24 (MARMYARRRGTSSSVRPYRKEAPE) is disordered.

This sequence belongs to the universal ribosomal protein uS15 family. In terms of assembly, part of the 30S ribosomal subunit.

The sequence is that of Small ribosomal subunit protein uS15 from Methanoculleus marisnigri (strain ATCC 35101 / DSM 1498 / JR1).